The following is a 524-amino-acid chain: GMP synthase [glutamine-hydrolyzing] (524 aa).

Positions 10–199 constitute a Glutamine amidotransferase type-1 domain; the sequence is PVLVVDFGAQ…LTEVAGLEQT (190 aa). C87 (nucleophile) is an active-site residue. Residues H173 and E175 contribute to the active site. A GMPS ATP-PPase domain is found at 200-398; that stretch reads WTSANIAQQL…LGLPEEIVAR (199 aa). 228–234 contacts ATP; that stretch reads SGGVDSA.

As to quaternary structure, homodimer.

The enzyme catalyses XMP + L-glutamine + ATP + H2O = GMP + L-glutamate + AMP + diphosphate + 2 H(+). The protein operates within purine metabolism; GMP biosynthesis; GMP from XMP (L-Gln route): step 1/1. Catalyzes the synthesis of GMP from XMP. The sequence is that of GMP synthase [glutamine-hydrolyzing] (guaA) from Corynebacterium ammoniagenes (Brevibacterium ammoniagenes).